The primary structure comprises 245 residues: tRNA (guanine-N(7)-)-methyltransferase (245 aa).

S-adenosyl-L-methionine is bound by residues E71, E96, D123, and D146. D146 is an active-site residue. K150 is a substrate binding site. Residues 152–157 form an interaction with RNA region; the sequence is KHNKRR. Substrate contacts are provided by residues D182 and 224–227; that span reads TKFE.

It belongs to the class I-like SAM-binding methyltransferase superfamily. TrmB family.

The catalysed reaction is guanosine(46) in tRNA + S-adenosyl-L-methionine = N(7)-methylguanosine(46) in tRNA + S-adenosyl-L-homocysteine. Its pathway is tRNA modification; N(7)-methylguanine-tRNA biosynthesis. Functionally, catalyzes the formation of N(7)-methylguanine at position 46 (m7G46) in tRNA. The sequence is that of tRNA (guanine-N(7)-)-methyltransferase from Albidiferax ferrireducens (strain ATCC BAA-621 / DSM 15236 / T118) (Rhodoferax ferrireducens).